The following is a 286-amino-acid chain: MQNKIDYKNIKKIGLVTRPNVSLDKEILKLQSILSIYKVELVLFKESSEILDLPKYGLDDLFKISDFVISLGGDGTLISLCRKACEYDKAVLGIHAGHLGFLTDFKVDEAENFFQAFFQGEFRIEKPYLLSVFLEDKQGKILEKLAFNDVVISKNNQASMAHIEVFRKEKKFNEYFGDGLIVATPAGSTAYNLSANGPIVYTLAQAFILTPVCSHSLTQRPIVLPKGFEIEIMAKDCILCIDGQENYKMNDFKSIKVGLSDKNVALIHPKNRDYFQILKEKLHWGN.

Residue Asp-74 is the Proton acceptor of the active site. Residues 74–75, 148–149, Asp-178, Ala-186, 189–194, and Gln-244 contribute to the NAD(+) site; these read DG, ND, and TAYNLS.

It belongs to the NAD kinase family. A divalent metal cation serves as cofactor.

The protein localises to the cytoplasm. The catalysed reaction is NAD(+) + ATP = ADP + NADP(+) + H(+). Involved in the regulation of the intracellular balance of NAD and NADP, and is a key enzyme in the biosynthesis of NADP. Catalyzes specifically the phosphorylation on 2'-hydroxyl of the adenosine moiety of NAD to yield NADP. The protein is NAD kinase of Campylobacter jejuni subsp. jejuni serotype O:6 (strain 81116 / NCTC 11828).